A 290-amino-acid chain; its full sequence is Diaminopimelate epimerase (290 aa).

Residues asparagine 14 and asparagine 67 each coordinate substrate. Cysteine 76 serves as the catalytic Proton donor. Substrate is bound by residues 77-78 (GN), asparagine 166, asparagine 199, and 217-218 (ER). Catalysis depends on cysteine 226, which acts as the Proton acceptor. 227-228 (GT) serves as a coordination point for substrate.

It belongs to the diaminopimelate epimerase family. As to quaternary structure, homodimer.

It is found in the cytoplasm. It catalyses the reaction (2S,6S)-2,6-diaminopimelate = meso-2,6-diaminopimelate. The protein operates within amino-acid biosynthesis; L-lysine biosynthesis via DAP pathway; DL-2,6-diaminopimelate from LL-2,6-diaminopimelate: step 1/1. Catalyzes the stereoinversion of LL-2,6-diaminopimelate (L,L-DAP) to meso-diaminopimelate (meso-DAP), a precursor of L-lysine and an essential component of the bacterial peptidoglycan. This chain is Diaminopimelate epimerase, found in Geobacillus thermodenitrificans (strain NG80-2).